Here is a 332-residue protein sequence, read N- to C-terminus: Ferrochelatase (332 aa).

Fe cation is bound by residues His-201 and Glu-283.

It belongs to the ferrochelatase family.

It localises to the cytoplasm. It catalyses the reaction heme b + 2 H(+) = protoporphyrin IX + Fe(2+). Its pathway is porphyrin-containing compound metabolism; protoheme biosynthesis; protoheme from protoporphyrin-IX: step 1/1. Its function is as follows. Catalyzes the ferrous insertion into protoporphyrin IX. This Francisella tularensis subsp. holarctica (strain FTNF002-00 / FTA) protein is Ferrochelatase.